Consider the following 67-residue polypeptide: MPGGVPWSAYLKMLSSSLLAMCAGAQVVHWYYRPDLTIPEIPPKPGELKTELLGLKERRHEPHVSQQ.

Residues 1-8 are Mitochondrial matrix-facing; sequence MPGGVPWS. Residues 9-25 form a helical; Signal-anchor for type II membrane protein membrane-spanning segment; the sequence is AYLKMLSSSLLAMCAGA. The Mitochondrial intermembrane portion of the chain corresponds to 26 to 67; sequence QVVHWYYRPDLTIPEIPPKPGELKTELLGLKERRHEPHVSQQ.

This sequence belongs to the UQCC6 family. In terms of assembly, interacts with UQCRC1. Interacts with UQCRQ. Interacts with UQCC5. Forms a complex, named COMB/coordinator of mitochondrial CYTB biogenesis, composed of UQCC1, UQCC2, UQCC4, UQCC5 and UQCC6; stabilizes nascent cytochrome b/MT-CYB and promotes its membrane insertion. Forms a complex, named COMA, composed of UQCC1, UQCC2 and UQCC4; activates MT-CYB translation. Forms a complex, named COMC, composed of UQCC1, UQCC2; UQCC3 and UQCC4; mediates MT-CYB hemylation and association with the first nuclear-encoded complex III subunit UQCRQ. Interacts with MT-CYB. In terms of tissue distribution, highly expressed in brown adipose, cardiac and skeletal muscle (at protein level).

It is found in the mitochondrion inner membrane. In terms of biological role, required for the assembly and stability of the mitochondrial ubiquinol-cytochrome c reductase complex (complex III or cytochrome b-c1 complex), a multisubunit transmembrane complex that is part of the mitochondrial electron transport chain (ETC) which drives oxidative phosphorylation. Mediates early complex III biogenesis. Participates in regulating the levels of electron transport chain proteins, and therefore energy supply, in response to changes in energy demand. Also required for cytochrome c oxidase complex (complex IV) assembly. This is Ubiquinol-cytochrome c reductase complex assembly factor 6 from Mus musculus (Mouse).